A 118-amino-acid polypeptide reads, in one-letter code: BolA-like protein 3 (118 aa).

Belongs to the BolA/IbaG family. As to quaternary structure, interacts with NFU1.

The protein resides in the mitochondrion matrix. In terms of biological role, acts as a mitochondrial iron-sulfur (Fe-S) cluster assembly factor that facilitates [4Fe-4S] cluster insertion into a subset of mitochondrial proteins such as lipoyl synthase (LS) and succinate dehydrogenase (SDH). Required during the last step of iron-sulfur protein assembly when the iron-sulfur cluster is inserted into the target protein. Acts together with NFU1, later than BOL1 and GRX5 in the [4Fe-4S] cluster insertion process. Not required for [2Fe-2S] cluster insertion into mitochondrial proteins. The polypeptide is BolA-like protein 3 (Saccharomyces cerevisiae (strain ATCC 204508 / S288c) (Baker's yeast)).